The primary structure comprises 1363 residues: Neurexin-1 (1363 aa).

Topologically, residues serine 1–threonine 1287 are extracellular. The N-linked (GlcNAc...) asparagine glycan is linked to asparagine 49. An EGF-like 1 domain is found at glutamine 67–serine 105. 3 disulfide bridges follow: cysteine 71–cysteine 83, cysteine 77–cysteine 92, and cysteine 94–cysteine 104. 2 consecutive Laminin G-like domains span residues isoleucine 132–cysteine 329 and aspartate 336–cysteine 528. Ca(2+) contacts are provided by aspartate 178, leucine 195, and methionine 263. 5 cysteine pairs are disulfide-bonded: cysteine 293/cysteine 329, cysteine 499/cysteine 528, cysteine 536/cysteine 547, cysteine 541/cysteine 556, and cysteine 558/cysteine 568. The 38-residue stretch at threonine 532–glutamate 569 folds into the EGF-like 2 domain. 2 consecutive Laminin G-like domains span residues isoleucine 574–cysteine 747 and aspartate 761–cysteine 936. Asparagine 646 is a glycosylation site (N-linked (GlcNAc...) asparagine). 4 disulfides stabilise this stretch: cysteine 908–cysteine 936, cysteine 943–cysteine 954, cysteine 948–cysteine 963, and cysteine 965–cysteine 975. One can recognise an EGF-like 3 domain in the interval proline 939–asparagine 976. In terms of domain architecture, Laminin G-like 5 spans tyrosine 982–valine 1180. The N-linked (GlcNAc...) asparagine glycan is linked to asparagine 1079. A disordered region spans residues cysteine 1244–isoleucine 1280. The helical transmembrane segment at glycine 1288–methionine 1308 threads the bilayer. Over tyrosine 1309–valine 1363 the chain is Cytoplasmic. The tract at residues asparagine 1330–valine 1363 is disordered.

This sequence belongs to the neurexin family. In terms of assembly, the cytoplasmic C-terminal region binds to CASK. The laminin G-like domain 1 binds to NXPH1. Specific isoforms bind to alpha-dystroglycan and to alpha-latrotoxin. In terms of processing, N- and O-glycosylated.

The protein resides in the membrane. Its function is as follows. Neuronal cell surface protein that may be involved in cell recognition and cell adhesion. May mediate intracellular signaling. This chain is Neurexin-1 (NRXN1), found in Gallus gallus (Chicken).